We begin with the raw amino-acid sequence, 274 residues long: Glutamate racemase (274 aa).

Substrate is bound by residues 9 to 10 (DS) and 41 to 42 (YG). Residue cysteine 72 is the Proton donor/acceptor of the active site. Residue 73–74 (NT) participates in substrate binding. Catalysis depends on cysteine 184, which acts as the Proton donor/acceptor. 185–186 (TH) serves as a coordination point for substrate.

Belongs to the aspartate/glutamate racemases family.

The enzyme catalyses L-glutamate = D-glutamate. It functions in the pathway cell wall biogenesis; peptidoglycan biosynthesis. Provides the (R)-glutamate required for cell wall biosynthesis. This is Glutamate racemase from Oceanobacillus iheyensis (strain DSM 14371 / CIP 107618 / JCM 11309 / KCTC 3954 / HTE831).